The following is a 527-amino-acid chain: Mitogen-activated protein kinase kinae MKK2 (527 aa).

Disordered regions lie at residues 1 to 143 and 156 to 189; these read MHDQ…SAGS and IGST…DKDG. Over residues 107 to 129 the composition is skewed to low complexity; the sequence is QQGQSASGGSESSAAHSRSGSFG. The segment covering 134–143 has biased composition (polar residues); the sequence is RTSNPTSAGS. Basic and acidic residues predominate over residues 177–189; that stretch reads ERSDGGAGMDKDG. The region spanning 227 to 497 is the Protein kinase domain; sequence IVELGGLGEG…PWRMLEHPWM (271 aa). ATP contacts are provided by residues 233 to 241 and K256; that span reads LGEGAGGAV.

The protein belongs to the protein kinase superfamily. STE Ser/Thr protein kinase family. MAP kinase kinase subfamily. As to quaternary structure, interacts with the adapter protein MST50.

The catalysed reaction is L-seryl-[protein] + ATP = O-phospho-L-seryl-[protein] + ADP + H(+). It carries out the reaction L-threonyl-[protein] + ATP = O-phospho-L-threonyl-[protein] + ADP + H(+). Its function is as follows. Mitogen-activated protein kinase kinase; part of the MCK1-MKK2-MPS1 MAP kinase (MAPK) signal transduction cascade that is essential for appressorium formation, penetration and invasive growth. Beside its role in pathogenesis, the MPS1 cascade is active in conidiation and cellular stress responses. Targets downstream of the the MPS1-MAPK pathway include transcription factors MIG1 and SWI6, as well as GSK1 and MPG1. In Pyricularia oryzae (strain 70-15 / ATCC MYA-4617 / FGSC 8958) (Rice blast fungus), this protein is Mitogen-activated protein kinase kinae MKK2.